Consider the following 400-residue polypeptide: Tryptophan--tRNA ligase, cytoplasmic (400 aa).

A 'HIGH' region motif is present at residues 95–104 (PSSGSLHFGH). The 'KMSKS' region signature appears at 281 to 285 (KMSAS).

It belongs to the class-I aminoacyl-tRNA synthetase family.

Its subcellular location is the cytoplasm. The enzyme catalyses tRNA(Trp) + L-tryptophan + ATP = L-tryptophyl-tRNA(Trp) + AMP + diphosphate + H(+). In Dictyostelium discoideum (Social amoeba), this protein is Tryptophan--tRNA ligase, cytoplasmic (trpS).